The sequence spans 131 residues: D-ribose pyranase (131 aa).

His-20 functions as the Proton donor in the catalytic mechanism. Substrate contacts are provided by residues Asp-28, His-98, and 120–122; that span reads YSN.

This sequence belongs to the RbsD / FucU family. RbsD subfamily. In terms of assembly, homodecamer.

It localises to the cytoplasm. It catalyses the reaction beta-D-ribopyranose = beta-D-ribofuranose. It functions in the pathway carbohydrate metabolism; D-ribose degradation; D-ribose 5-phosphate from beta-D-ribopyranose: step 1/2. Catalyzes the interconversion of beta-pyran and beta-furan forms of D-ribose. This is D-ribose pyranase from Pediococcus pentosaceus (strain ATCC 25745 / CCUG 21536 / LMG 10740 / 183-1w).